We begin with the raw amino-acid sequence, 232 residues long: Phycobilisome rod-core linker polypeptide cpcG (232 aa).

Residues 11–191 (STQNQRVDGY…PRYGADFKEK (181 aa)) form the PBS-linker domain.

Belongs to the phycobilisome linker protein family. In terms of assembly, the phycobilisome is a hemidiscoidal structure that is composed of two distinct substructures: a core complex and a number of rods radiating from the core.

It is found in the plastid. The protein localises to the chloroplast. Its subcellular location is the chloroplast thylakoid membrane. Functionally, rod-core linker protein required for attachment of phycocyanin to allophycocyanin in cores of phycobilisomes. Its function is as follows. Linker polypeptides determine the state of aggregation and the location of the disk-shaped phycobiliprotein units within the phycobilisome and modulate their spectroscopic properties in order to mediate a directed and optimal energy transfer. The polypeptide is Phycobilisome rod-core linker polypeptide cpcG (cpcG) (Pyropia yezoensis (Susabi-nori)).